The primary structure comprises 84 residues: uncharacterized protein (84 aa).

This is an uncharacterized protein from Lepidoptera (butterflies and moths).